A 319-amino-acid polypeptide reads, in one-letter code: ATP-dependent 6-phosphofructokinase (319 aa).

Gly-11 is a binding site for ATP. Position 21–25 (21–25 (RAVVR)) interacts with ADP. ATP is bound by residues 72–73 (RC) and 102–105 (GDGS). Residue Asp-103 participates in Mg(2+) binding. Position 125-127 (125-127 (TID)) interacts with substrate. Asp-127 serves as the catalytic Proton acceptor. Arg-154 contributes to the ADP binding site. Residues Arg-162 and 169-171 (MGR) each bind substrate. ADP is bound by residues 185-187 (GAE), Arg-211, and 213-215 (KKH). Residues Glu-222, Arg-243, and 249–252 (HVQR) contribute to the substrate site.

It belongs to the phosphofructokinase type A (PFKA) family. ATP-dependent PFK group I subfamily. Prokaryotic clade 'B1' sub-subfamily. In terms of assembly, homotetramer. It depends on Mg(2+) as a cofactor.

Its subcellular location is the cytoplasm. It catalyses the reaction beta-D-fructose 6-phosphate + ATP = beta-D-fructose 1,6-bisphosphate + ADP + H(+). It functions in the pathway carbohydrate degradation; glycolysis; D-glyceraldehyde 3-phosphate and glycerone phosphate from D-glucose: step 3/4. Its activity is regulated as follows. Allosterically activated by ADP and other diphosphonucleosides, and allosterically inhibited by phosphoenolpyruvate. Functionally, catalyzes the phosphorylation of D-fructose 6-phosphate to fructose 1,6-bisphosphate by ATP, the first committing step of glycolysis. This Bacillus mycoides (strain KBAB4) (Bacillus weihenstephanensis) protein is ATP-dependent 6-phosphofructokinase.